The following is a 98-amino-acid chain: NADH-ubiquinone oxidoreductase chain 4L (98 aa).

3 helical membrane passes run 1–21, 29–49, and 59–79; these read MTTM…GVFI, TLLC…LILL, and LPLI…ALLV.

Belongs to the complex I subunit 4L family. As to quaternary structure, core subunit of respiratory chain NADH dehydrogenase (Complex I) which is composed of 45 different subunits.

It localises to the mitochondrion inner membrane. It catalyses the reaction a ubiquinone + NADH + 5 H(+)(in) = a ubiquinol + NAD(+) + 4 H(+)(out). Core subunit of the mitochondrial membrane respiratory chain NADH dehydrogenase (Complex I) which catalyzes electron transfer from NADH through the respiratory chain, using ubiquinone as an electron acceptor. Part of the enzyme membrane arm which is embedded in the lipid bilayer and involved in proton translocation. The polypeptide is NADH-ubiquinone oxidoreductase chain 4L (MT-ND4L) (Ornithorhynchus anatinus (Duckbill platypus)).